A 1720-amino-acid chain; its full sequence is MAAAPSALLLLPPFPVLSTYRLQSRSRPSAPETDDSRVGGIMRGEKNYYFRGAAGDHGSCPTTTSPLASALLMPSEAVSSSWSESGGGLSGGDEEDTRLLQLLRTARDPSEAFQALQAALPRRGGRLGFPRRKEALYRALGRVLVEGGSDEKRLCLQLLSDVLRGQGEAGQLEEAFSLALLPQLVVSLREENPALRKDALQILHICLKRSPGEVLRTLIQQGLESTDARLRASTALLLPILLTTEDLLLGLDLTEVIISLARKLGDQETEEESETAFSALQQIGERLGQDRFQSYISRLPSALRRHYNRRLESQFGSQVPYYLELEASGFPEDPLPCAVTLSNSNLKFGIIPQELHSRLLDQEDYKNRTQAVEELKQVLGKFNPSSTPHSSLVGFISLLYNLLDDSNFKVVHGTLEVLHLLVIRLGEQVQQFLGPVIAASVKVLADNKLVIKQEYMKIFLKLMKEVGPQQVLCLLLEHLKHKHSRVREEVVNICICSLLTYPSEDFDLPKLSFDLAPALVDSKRRVRQAALEAFAVLASSMGSGKTSILFKAVDTVELQDNGDGVMNAVQARLARKTLPRLTEQGFVEYAVLMPSSAGGRSNHLAHGADTDWLLAGNRTQSAHCHCGDHVRDSMHIYGSYSPTICTRRVLSAGKGKNKLPWENEQPGIMGENQTSTSKDIEQFSTYDFIPSAKLKLSQGMPVNDDLCFSRKRVSRNLFQNSRDFNPDCLPLCAAGTTGTHQTNLSGKCAQLGFSQICGKTGSVGSDLQFLGTTSSHQEKVYASLNFGSKTQQTFGSQTECTSSNGQNPSPGAYILPSYPVSSPRTSPKHTSPLIISPKKSQDNSVNFSNSWPLKSFEGLSKPSPQKKLVSQKSSDPTGRNHGENSQEKPPVQLTPALVRSPSSRRGLNGTKPVPPIPRGISLLPDKADLSTVGHKKKEPDDIWKCEKDSLPIDLSELNFKDKDLDQEEMHSSLRSLRNSAAKKRAKLSGSTSDLESPDSAMKLDLTMDSPSLSSSPNINSYSESGVYSQESLTSSLSTTPQGKRIMSDIFPTFGSKPCPTRLSSAKKKISHIAEQSPSAGSSSNPQQISSFDFTTTKALSEDSVVVVGKGVFGSLSSAPATCSQSVISSVENGDTFSIKQSIEPPSGIYGRSVQQNISSYLDVENEKDAKVSISKSTYNKMRQKRKEEKELFHNKDCEKKEKNSWERMRHTGTEKMASESETPTGAISQYKERMPSVTHSPEIMDLSELRPFSKPEIALTEALRLLADEDWEKKIEGLNFIRCLAAFHSEILNTKLHETNFAVVQEVKNLRSGVSRAAVVCLSDLFTYLKKSMDQELDTTVKVLLHKAGESNTFIREDVDKALRAMVNNVTPARAVVSLINGGQRYYGRKMLFFMMCHPNFEKMLEKYVPSKDLPYIKDSVRNLQQKGLGEIPLDTPSAKGRRSHTGSVGNTRSSSVSRDAFNSAERAVTEVREVTRKSVPRNSLESAEYLKLITGLLNAKDFRDRINGIKQLLSDTENNQDLVVGNIVKIFDAFKSRLHDSNSKVNLVALETMHKMIPLLRDHLSPIINMLIPAIVDNNLNSKNPGIYAAATNVVQALSQHVDNYLLLQPFCTKAQFLNGKAKQDMTEKLADIVTELYQRKPHATEQKVLVVLWHLLGNMTNSGSLPGAGGNIRTATAKLSKALFAQMGQNLLNQAASQPPHIKKSLEELLDMTILNEL.

2 TOG regions span residues 94-312 and 352-596; these read EEDT…RRLE and PQEL…MPSS. 8 HEAT repeats span residues 175 to 212, 214 to 247, 251 to 289, 345 to 384, 390 to 427, 431 to 466, 467 to 504, and 506 to 543; these read AFSL…RSPG, VLRT…TEDL, LDLT…RLGQ, NLKF…KFNP, SSLV…RLGE, QFLG…MKEV, GPQQ…YPSE, and FDLP…SMGS. Composition is skewed to polar residues over residues 794-809, 819-829, 842-852, and 868-877; these read FGSQ…QNPS, PVSSPRTSPKH, DNSVNFSNSWP, and LVSQKSSDPT. Disordered regions lie at residues 794 to 924, 970 to 998, and 1067 to 1087; these read FGSQ…SLLP, HSSL…ESPD, and KKIS…NPQQ. The span at 1073–1087 shows a compositional bias: polar residues; sequence AEQSPSAGSSSNPQQ. The segment at 1256-1425 is TOG 3; the sequence is EIALTEALRL…YIKDSVRNLQ (170 aa). HEAT repeat units lie at residues 1294 to 1331 and 1335 to 1372; these read TKLH…YLKK and QELD…NVTP. The segment at 1430-1462 is disordered; that stretch reads GEIPLDTPSAKGRRSHTGSVGNTRSSSVSRDAF. Over residues 1446–1458 the composition is skewed to polar residues; sequence TGSVGNTRSSSVS. The interval 1484-1720 is TOG 4; it reads SLESAEYLKL…LLDMTILNEL (237 aa). 3 HEAT repeats span residues 1485–1522, 1526–1563, and 1567–1605; these read LESA…NNQD, GNIV…LLRD, and PIIN…HVDN.

This sequence belongs to the Crescerin family. Interacts with ARMC9, CCDC66, CEP104 and CSPP1.

It is found in the cell projection. It localises to the cilium. The protein localises to the cytoplasm. The protein resides in the cytoskeleton. Its subcellular location is the cilium axoneme. Functionally, involved in ciliogenesis. It is required for appropriate acetylation and polyglutamylation of ciliary microtubules, and regulation of cilium length. Interacts with microtubules and promotes microtubule polymerization via its HEAT repeat domains, especially those in TOG region 2 and 4. The protein is TOG array regulator of axonemal microtubules protein 1 of Homo sapiens (Human).